A 251-amino-acid polypeptide reads, in one-letter code: MTVSINEVSKYFSKQTGTVQVLENINFQLEKGDFVTVIGPSGCGKSTLLKIIAGLDNDFEGEIIIDGERITKPSKKQGFIFQEHRLFPWLTVEENIAADLSLKDKYVKDKVKEWVEIVRLDGFEKSYPKEISGGMSQRVAIARALLRDPNVLLLDEPFGALDAFTRSHLQEVLLNIWEQKKTTMIFVTHDIDEAIYLSNRIVIMSAKPGKIHKVIENKLPYPRSKNSESFQEIRKKVLQQFEYGGLIQTSL.

The 229-residue stretch at 3-231 folds into the ABC transporter domain; sequence VSINEVSKYF…PRSKNSESFQ (229 aa). 39-46 lines the ATP pocket; sequence GPSGCGKS.

It belongs to the ABC transporter superfamily. Aliphatic sulfonates importer (TC 3.A.1.17.2) family. The complex is composed of two ATP-binding proteins (SsuB), two transmembrane proteins (SsuC) and a solute-binding protein (SsuA).

It is found in the cell membrane. The enzyme catalyses ATP + H2O + aliphatic sulfonate-[sulfonate-binding protein]Side 1 = ADP + phosphate + aliphatic sulfonateSide 2 + [sulfonate-binding protein]Side 1.. Its function is as follows. Part of the ABC transporter complex SsuABC involved in aliphatic sulfonates import. Responsible for energy coupling to the transport system. The chain is Aliphatic sulfonates import ATP-binding protein SsuB from Bacillus cereus (strain ZK / E33L).